A 301-amino-acid polypeptide reads, in one-letter code: GTPase IMAP family member 3 (301 aa).

Over Met-1 to Asp-279 the chain is Cytoplasmic. Positions Ser-20–Glu-223 constitute an AIG1-type G domain. GTP contacts are provided by residues Gly-29 to Ala-37, Ser-50, Arg-147 to Glu-149, and Asn-184. The segment at Val-263 to Val-301 is required for targeting to the endoplasmic reticulum. A helical; Anchor for type IV membrane protein membrane pass occupies residues Phe-280–Tyr-300. Position 301 (Val-301) is a topological domain, lumenal.

This sequence belongs to the TRAFAC class TrmE-Era-EngA-EngB-Septin-like GTPase superfamily. AIG1/Toc34/Toc159-like paraseptin GTPase family. IAN subfamily. In terms of assembly, interacts with BAD, BAK1, BAX, BCL2, BCL2L1/Bcl-xL and BCL2L11/BimEL. The interaction with BAX is increased, when cells initiate apoptosis upon IL2 withdrawal. Expressed in thymus (in thymocytes), spleen (in splenocytes), lymph node and, at lower levels, in lung. Highly expressed in T lymphocytes.

It localises to the endoplasmic reticulum membrane. Its function is as follows. During thymocyte development, may support the positive selection of CD4 and CD8 T cells. May play a role in mitochondrial DNA segregation in hematopoietic tissues. Binds GTP. The sequence is that of GTPase IMAP family member 3 (Gimap3) from Mus musculus (Mouse).